The following is a 389-amino-acid chain: Arrestin-C (389 aa).

Positions 369–389 (AQQEPSGESQEALAAEGNEGS) are disordered.

The protein belongs to the arrestin family. Homodimer; disulfide-linked in response to retinal illumination. Interacts with CXCR4; the interaction is dependent on the C-terminal phosphorylation of CXCR4 and modulates the calcium ion mobilization activity of CXCR4. Interacts with GPR84. As to expression, expressed in cone photoreceptors in the retina (at protein level).

The protein localises to the photoreceptor inner segment. It is found in the cell projection. Its subcellular location is the cilium. It localises to the photoreceptor outer segment. In terms of biological role, may play a role in an as yet undefined retina-specific signal transduction. Could bind to photoactivated-phosphorylated red/green opsins. This is Arrestin-C (ARR3) from Bos taurus (Bovine).